Consider the following 313-residue polypeptide: N-acetyl-gamma-glutamyl-phosphate reductase (313 aa).

Cys117 is an active-site residue.

This sequence belongs to the NAGSA dehydrogenase family. Type 2 subfamily.

It is found in the cytoplasm. The enzyme catalyses N-acetyl-L-glutamate 5-semialdehyde + phosphate + NADP(+) = N-acetyl-L-glutamyl 5-phosphate + NADPH + H(+). The protein operates within amino-acid biosynthesis; L-arginine biosynthesis; N(2)-acetyl-L-ornithine from L-glutamate: step 3/4. Its function is as follows. Catalyzes the NADPH-dependent reduction of N-acetyl-5-glutamyl phosphate to yield N-acetyl-L-glutamate 5-semialdehyde. In Burkholderia orbicola (strain MC0-3), this protein is N-acetyl-gamma-glutamyl-phosphate reductase.